A 206-amino-acid polypeptide reads, in one-letter code: Urease accessory protein UreG (206 aa).

11–18 (GPVGSGKT) contacts GTP.

Belongs to the SIMIBI class G3E GTPase family. UreG subfamily. As to quaternary structure, homodimer. UreD, UreF and UreG form a complex that acts as a GTP-hydrolysis-dependent molecular chaperone, activating the urease apoprotein by helping to assemble the nickel containing metallocenter of UreC. The UreE protein probably delivers the nickel.

The protein localises to the cytoplasm. Functionally, facilitates the functional incorporation of the urease nickel metallocenter. This process requires GTP hydrolysis, probably effectuated by UreG. This chain is Urease accessory protein UreG, found in Mycolicibacterium gilvum (strain PYR-GCK) (Mycobacterium gilvum (strain PYR-GCK)).